A 203-amino-acid chain; its full sequence is Histidine biosynthesis bifunctional protein HisIE (203 aa).

The tract at residues 1 to 114 (MLTEQQRREL…FGDTAHQWLF (114 aa)) is phosphoribosyl-AMP cyclohydrolase. Residues 115–203 (LYQLEQLLAE…VIENLRKRHQ (89 aa)) form a phosphoribosyl-ATP pyrophosphohydrolase region.

It in the N-terminal section; belongs to the PRA-CH family. In the C-terminal section; belongs to the PRA-PH family.

It is found in the cytoplasm. It carries out the reaction 1-(5-phospho-beta-D-ribosyl)-ATP + H2O = 1-(5-phospho-beta-D-ribosyl)-5'-AMP + diphosphate + H(+). The catalysed reaction is 1-(5-phospho-beta-D-ribosyl)-5'-AMP + H2O = 1-(5-phospho-beta-D-ribosyl)-5-[(5-phospho-beta-D-ribosylamino)methylideneamino]imidazole-4-carboxamide. Its pathway is amino-acid biosynthesis; L-histidine biosynthesis; L-histidine from 5-phospho-alpha-D-ribose 1-diphosphate: step 2/9. It participates in amino-acid biosynthesis; L-histidine biosynthesis; L-histidine from 5-phospho-alpha-D-ribose 1-diphosphate: step 3/9. The chain is Histidine biosynthesis bifunctional protein HisIE from Escherichia coli O6:H1 (strain CFT073 / ATCC 700928 / UPEC).